Consider the following 237-residue polypeptide: Ribonuclease PH (237 aa).

Phosphate is bound by residues arginine 86 and 124–126; that span reads GTR.

The protein belongs to the RNase PH family. Homohexameric ring arranged as a trimer of dimers.

The enzyme catalyses tRNA(n+1) + phosphate = tRNA(n) + a ribonucleoside 5'-diphosphate. Functionally, phosphorolytic 3'-5' exoribonuclease that plays an important role in tRNA 3'-end maturation. Removes nucleotide residues following the 3'-CCA terminus of tRNAs; can also add nucleotides to the ends of RNA molecules by using nucleoside diphosphates as substrates, but this may not be physiologically important. Probably plays a role in initiation of 16S rRNA degradation (leading to ribosome degradation) during starvation. This Bradyrhizobium sp. (strain ORS 278) protein is Ribonuclease PH.